Reading from the N-terminus, the 426-residue chain is Lipoyl synthase, mitochondrial (426 aa).

The transit peptide at 1–29 (MASPAPLQRLQAPLRRSLARAAVLSSRTY) directs the protein to the mitochondrion. Positions 27–42 (RTYATIPSPSDPGLTQ) are enriched in polar residues. The interval 27 to 61 (RTYATIPSPSDPGLTQSSPSPAASTTPAKKAPRPS) is disordered. Residues 43–55 (SSPSPAASTTPAK) are compositionally biased toward low complexity. Residues Cys140, Cys145, Cys151, Cys171, Cys175, Cys178, and Ser388 each contribute to the [4Fe-4S] cluster site. The Radical SAM core domain maps to 154–377 (GNDKSAATAT…KQRALDMGFL (224 aa)).

The protein belongs to the radical SAM superfamily. Lipoyl synthase family. Requires [4Fe-4S] cluster as cofactor.

The protein localises to the mitochondrion. The enzyme catalyses [[Fe-S] cluster scaffold protein carrying a second [4Fe-4S](2+) cluster] + N(6)-octanoyl-L-lysyl-[protein] + 2 oxidized [2Fe-2S]-[ferredoxin] + 2 S-adenosyl-L-methionine + 4 H(+) = [[Fe-S] cluster scaffold protein] + N(6)-[(R)-dihydrolipoyl]-L-lysyl-[protein] + 4 Fe(3+) + 2 hydrogen sulfide + 2 5'-deoxyadenosine + 2 L-methionine + 2 reduced [2Fe-2S]-[ferredoxin]. The protein operates within protein modification; protein lipoylation via endogenous pathway; protein N(6)-(lipoyl)lysine from octanoyl-[acyl-carrier-protein]: step 2/2. In terms of biological role, catalyzes the radical-mediated insertion of two sulfur atoms into the C-6 and C-8 positions of the octanoyl moiety bound to the lipoyl domains of lipoate-dependent enzymes, thereby converting the octanoylated domains into lipoylated derivatives. The protein is Lipoyl synthase, mitochondrial of Podospora anserina (strain S / ATCC MYA-4624 / DSM 980 / FGSC 10383) (Pleurage anserina).